The following is a 633-amino-acid chain: MSELNYEELGLKVGLEIHQQLNTSHKLFCNCSTNLKEDYKLTLERYLRPALSELGEVDVAALFEWKKGKKYVYRIPITTSCLVEADEEPPHAINEEALKIALAIAIALNSNIVDEIYVMRKIVIDGSNTTGFQRTAIVALGGMLKDEGVTIQTIAVEEDAARKIDERTDQVTYSLDRLGIPLIEISTGPDIRSPEQAERVALKIGQLLRMTGKVKRGIGTIRQDLNISIKGGTKIEIKGVQKLELIPDIVRYEAMRQFNLLKIKEELNKRGVSKNLILSNFVVKDLTELFKNTNSKIIKSGIEKGGLVYGIRAYKLKGILGWELIPKKRRFGTEIADYVRALAELGGLFHSDELPNYGITEEEINKVREALNATTEDGFILIVGERERLDKAVEVIRDRILLAFDGIPKETRGALDDGTTKFLRPQPSSARMYPETDIPPRRIDEKLLEDAKKFVPESPESKMKRYITLGLSEELAKEIIRDPRLDLFEELVNKYSPKVSPVVIASTITNTLKYVKSKGGDISKINEEDIEELIKSVYENKISKDSISEILLEYTTNKNVELKDVIRKYEALPTEELEKIIDDVISSNLDEIRKRKDKAVNLIMSKVMSKVKGRAEGKVILELIKSRLKNVME.

The protein belongs to the GatB/GatE family. GatE subfamily. In terms of assembly, heterodimer of GatD and GatE.

It catalyses the reaction L-glutamyl-tRNA(Gln) + L-glutamine + ATP + H2O = L-glutaminyl-tRNA(Gln) + L-glutamate + ADP + phosphate + H(+). In terms of biological role, allows the formation of correctly charged Gln-tRNA(Gln) through the transamidation of misacylated Glu-tRNA(Gln) in organisms which lack glutaminyl-tRNA synthetase. The reaction takes place in the presence of glutamine and ATP through an activated gamma-phospho-Glu-tRNA(Gln). The GatDE system is specific for glutamate and does not act on aspartate. This is Glutamyl-tRNA(Gln) amidotransferase subunit E from Saccharolobus islandicus (strain L.S.2.15 / Lassen #1) (Sulfolobus islandicus).